A 293-amino-acid chain; its full sequence is MASLKEIRAKVTSIKSTQKITRAMQMVAASKMRRAQERMEVGRPYADSMRRVISHLVHASSDYKHPYMVNRPVNKVGYIVITSDRGLAGGLNINLFKALTKSIQQYQDQSVQAEFAVIGAKGVSFFKNFGGKVTSAVTDYGDKPTFEQLNSPVQAMLEDYSNGKIDRIYVVYNKFVNAMTQKPTINQLVPLPDSAFAEEESGIQTELSWDYIYEPDIKTLIDELLGRYIESIVYQAVMENIASEQSSRMVAMKAATDNAGDLINDLQLVYNKLRQAAITREISEIVGGAAAVS.

The protein belongs to the ATPase gamma chain family. F-type ATPases have 2 components, CF(1) - the catalytic core - and CF(0) - the membrane proton channel. CF(1) has five subunits: alpha(3), beta(3), gamma(1), delta(1), epsilon(1). CF(0) has three main subunits: a, b and c.

It localises to the cell inner membrane. In terms of biological role, produces ATP from ADP in the presence of a proton gradient across the membrane. The gamma chain is believed to be important in regulating ATPase activity and the flow of protons through the CF(0) complex. The protein is ATP synthase gamma chain of Psychrobacter arcticus (strain DSM 17307 / VKM B-2377 / 273-4).